The primary structure comprises 94 residues: Integration host factor subunit beta (94 aa).

Belongs to the bacterial histone-like protein family. In terms of assembly, heterodimer of an alpha and a beta chain.

Its function is as follows. This protein is one of the two subunits of integration host factor, a specific DNA-binding protein that functions in genetic recombination as well as in transcriptional and translational control. The sequence is that of Integration host factor subunit beta from Brucella abortus (strain S19).